Here is a 331-residue protein sequence, read N- to C-terminus: MDFQQLILNKERRWQRNLVIMSVVLVLLSTIHLMVGEVFLSPFQSLSVFEQKLLLDLRLPRLVAAAMIGAALAVSGATLQVLLGNVLAEPGVLGISGGASLAMVLVMFALPVLPTPMIFMLAAIAGSMLFTLILVGIARAMHLTTARLLLVGVALGILSSAIVTWAFYFSDDLSLRQLMYWLMGSIGGASWYQHTVTLVMLPVLVWLCCQGKPLDKLMLGEIHATQLGVDVHQMRWKLILAISVLVGCSVALGGIISFVGLVVPHLLRLAFGTENRYLLPLSAIFGAALLVFADIGARLLLDSAELPLGVMTTSIGAPIFIWMLVKSHDAR.

The next 9 helical transmembrane spans lie at 20–42, 62–84, 91–113, 118–140, 147–169, 189–208, 240–262, 277–299, and 306–325; these read IMSVVLVLLSTIHLMVGEVFLSP, LVAAAMIGAALAVSGATLQVLLG, GVLGISGGASLAMVLVMFALPVL, IFMLAAIAGSMLFTLILVGIARA, RLLLVGVALGILSSAIVTWAFYF, ASWYQHTVTLVMLPVLVWLC, LAISVLVGCSVALGGIISFVGLV, YLLPLSAIFGAALLVFADIGARL, and LPLGVMTTSIGAPIFIWMLV.

This sequence belongs to the binding-protein-dependent transport system permease family. FecCD subfamily. As to quaternary structure, the complex is composed of two ATP-binding proteins (BtuD), two transmembrane proteins (BtuC) and a solute-binding protein (BtuF).

It is found in the cell inner membrane. Its function is as follows. Part of the ABC transporter complex BtuCDF involved in vitamin B12 import. Involved in the translocation of the substrate across the membrane. The chain is Vitamin B12 import system permease protein BtuC from Vibrio parahaemolyticus serotype O3:K6 (strain RIMD 2210633).